Reading from the N-terminus, the 270-residue chain is Phosphate import ATP-binding protein PstB 2 (270 aa).

One can recognise an ABC transporter domain in the interval 25-265 (LQAKDINIYY…PEKKQTEDYI (241 aa)). 57–64 (GPSGCGKS) contacts ATP.

The protein belongs to the ABC transporter superfamily. Phosphate importer (TC 3.A.1.7) family. In terms of assembly, the complex is composed of two ATP-binding proteins (PstB), two transmembrane proteins (PstC and PstA) and a solute-binding protein (PstS).

The protein resides in the cell membrane. It carries out the reaction phosphate(out) + ATP + H2O = ADP + 2 phosphate(in) + H(+). Part of the ABC transporter complex PstSACB involved in phosphate import. Responsible for energy coupling to the transport system. In Shouchella clausii (strain KSM-K16) (Alkalihalobacillus clausii), this protein is Phosphate import ATP-binding protein PstB 2.